A 251-amino-acid polypeptide reads, in one-letter code: Triosephosphate isomerase (251 aa).

A substrate-binding site is contributed by 9 to 11; sequence NWK. Residue H94 is the Electrophile of the active site. Catalysis depends on E166, which acts as the Proton acceptor. Residues G172, S211, and 232–233 contribute to the substrate site; that span reads GG.

Belongs to the triosephosphate isomerase family. Homodimer.

It is found in the cytoplasm. It carries out the reaction D-glyceraldehyde 3-phosphate = dihydroxyacetone phosphate. It participates in carbohydrate biosynthesis; gluconeogenesis. The protein operates within carbohydrate degradation; glycolysis; D-glyceraldehyde 3-phosphate from glycerone phosphate: step 1/1. Functionally, involved in the gluconeogenesis. Catalyzes stereospecifically the conversion of dihydroxyacetone phosphate (DHAP) to D-glyceraldehyde-3-phosphate (G3P). In Stenotrophomonas maltophilia (strain K279a), this protein is Triosephosphate isomerase.